The chain runs to 180 residues: KNCPACRLRKCCQAGMVLGGRKFKKFNKVRVMRALDAVAVPQPVGLPNESQALTQRITFSPNQEIQLFPPLINLLLSIEPDVIYAGYDNTKPETSSSLLTSLNHLAERQLLSVVKWSKSLPGFRNLHIDDQITLIQYSWMSLMVFGLGWRSYKHVSGQMLYFAPDLILNEQRMKESSFYS.

The NR C4-type zinc finger occupies 1–11 (KNCPACRLRKC). Positions 1 to 16 (KNCPACRLRKCCQAGM) form a DNA-binding region, nuclear receptor. Serine 60 bears the Phosphoserine mark. The NR LBD domain maps to 63–180 (QEIQLFPPLI…QRMKESSFYS (118 aa)). Residues 71 to 180 (LINLLLSIEP…QRMKESSFYS (110 aa)) are AF2; mediates transcriptional activation. Arginine 150 serves as a coordination point for progesterone.

Belongs to the nuclear hormone receptor family. NR3 subfamily. As to quaternary structure, interacts with SMARD1 and UNC45A. Interacts with CUEDC2; the interaction promotes ubiquitination, decreases sumoylation, and represses transcriptional activity. Interacts with PIAS3; the interaction promotes sumoylation of PR in a hormone-dependent manner, inhibits DNA-binding, and alters nuclear export. Interacts with SP1; the interaction requires ligand-induced phosphorylation by ERK1/2-MAPK. Interacts with PRMT2. Interacts with NCOA2 and NCOA1. Interacts with KLF9. Interacts with GTF2B. Post-translationally, phosphorylated on multiple serine sites. Several of these sites are hormone-dependent. Sumoylation is hormone-dependent and represses transcriptional activity. Sumoylation on all three sites is enhanced by PIAS3. Desumoylated by SENP1. Sumoylation is repressed by ubiquitination and modulated by phosphorylation. In terms of processing, ubiquitination is hormone-dependent and represses sumoylation. Post-translationally, palmitoylated by ZDHHC7 and ZDHHC21. Palmitoylation is required for plasma membrane targeting and for rapid intracellular signaling via ERK and AKT kinases and cAMP generation.

It is found in the nucleus. It localises to the cytoplasm. Functionally, the steroid hormones and their receptors are involved in the regulation of eukaryotic gene expression and affect cellular proliferation and differentiation in target tissues. Transcriptional activator of several progesteron-dependent promoters in a variety of cell types. Involved in activation of SRC-dependent MAPK signaling on hormone stimulation. The protein is Progesterone receptor (PGR) of Notamacropus eugenii (Tammar wallaby).